We begin with the raw amino-acid sequence, 73 residues long: Structural DNA-binding protein p10 (73 aa).

A disordered region spans residues 1–35 (MPTKAGTKSTAHKKTTTKGPSKSPKGKTHATALHQ).

The protein belongs to the asfivirus P10 family.

The protein localises to the virion. Functionally, may play a role in genome packaging through direct interaction with viral DNA. Binds to ssDNA and dsDNA with the same apparent affinity in vitro. This is Structural DNA-binding protein p10 from African swine fever virus (isolate Tick/Malawi/Lil 20-1/1983) (ASFV).